Consider the following 742-residue polypeptide: Ectonucleotide pyrophosphatase/phosphodiesterase 1 (742 aa).

The Cytoplasmic segment spans residues 1–113 (MELQNDLESL…TGFHSKVPFK (113 aa)). The chain crosses the membrane as a helical span at residues 114–134 (IIFRTLFGSLVFAIFLILMIN). The Extracellular portion of the chain corresponds to 135 to 742 (IAKPHHSTRV…SIDDLVDSDT (608 aa)). Residues Asn161 and Asn204 are each glycosylated (N-linked (GlcNAc...) asparagine). Residues 168–545 (PLTIVISLDG…VFTIGSHGYD (378 aa)) form a phosphodiesterase region. Residue Thr219 is the Nucleophile of the active site. 3 N-linked (GlcNAc...) asparagine glycosylation sites follow: Asn264, Asn296, and Asn403. Over residues 640–659 (EETEQDNVDNDNDDNDDGNT) the composition is skewed to acidic residues. 2 disordered regions span residues 640 to 670 (EETE…SSSL) and 686 to 711 (TLLG…TAST). The segment covering 691–711 (TSPSSRSSSSSSIQASATAST) has biased composition (low complexity).

The protein belongs to the nucleotide pyrophosphatase/phosphodiesterase family. Autophosphorylated as part of the catalytic cycle of phosphodiesterase/pyrophosphatase activity. In terms of processing, N-glycosylated.

It is found in the membrane. The catalysed reaction is Hydrolytically removes 5'-nucleotides successively from the 3'-hydroxy termini of 3'-hydroxy-terminated oligonucleotides.. It carries out the reaction a ribonucleoside 5'-triphosphate + H2O = a ribonucleoside 5'-phosphate + diphosphate + H(+). It catalyses the reaction a 2'-deoxyribonucleoside 5'-triphosphate + H2O = a 2'-deoxyribonucleoside 5'-phosphate + diphosphate + H(+). Its function is as follows. Mediates extracellular nucleotide derived phosphate hydrolysis along with NPP2 and PHO5. This Saccharomyces cerevisiae (strain ATCC 204508 / S288c) (Baker's yeast) protein is Ectonucleotide pyrophosphatase/phosphodiesterase 1 (NPP1).